Consider the following 751-residue polypeptide: Photosystem I P700 chlorophyll a apoprotein A1 (751 aa).

Transmembrane regions (helical) follow at residues 73-96 (IFSA…FHGA), 159-182 (LYCT…FHYH), 198-222 (MNHH…HLSL), 294-312 (TAHH…GHMY), 349-372 (WHAQ…HHMY), 388-414 (LSLF…IFMV), 435-457 (AIVS…LYIH), and 532-550 (FLVH…LILV). Residues C574 and C583 each contribute to the [4Fe-4S] cluster site. Transmembrane regions (helical) follow at residues 590-611 (HVFL…HFSW) and 665-687 (LSAY…MFLF). H676 is a chlorophyll a' binding site. Residues M684 and Y692 each coordinate chlorophyll a. W693 lines the phylloquinone pocket. The helical transmembrane segment at 725 to 745 (AVGVAHYLLGGIGTTWAFFLA) threads the bilayer.

Belongs to the PsaA/PsaB family. As to quaternary structure, the PsaA/B heterodimer binds the P700 chlorophyll special pair and subsequent electron acceptors. PSI consists of a core antenna complex that captures photons, and an electron transfer chain that converts photonic excitation into a charge separation. The eukaryotic PSI reaction center is composed of at least 11 subunits. The cofactor is P700 is a chlorophyll a/chlorophyll a' dimer, A0 is one or more chlorophyll a, A1 is one or both phylloquinones and FX is a shared 4Fe-4S iron-sulfur center..

It is found in the plastid. It localises to the chloroplast thylakoid membrane. It carries out the reaction reduced [plastocyanin] + hnu + oxidized [2Fe-2S]-[ferredoxin] = oxidized [plastocyanin] + reduced [2Fe-2S]-[ferredoxin]. Functionally, psaA and PsaB bind P700, the primary electron donor of photosystem I (PSI), as well as the electron acceptors A0, A1 and FX. PSI is a plastocyanin/cytochrome c6-ferredoxin oxidoreductase, converting photonic excitation into a charge separation, which transfers an electron from the donor P700 chlorophyll pair to the spectroscopically characterized acceptors A0, A1, FX, FA and FB in turn. Oxidized P700 is reduced on the lumenal side of the thylakoid membrane by plastocyanin or cytochrome c6. This is Photosystem I P700 chlorophyll a apoprotein A1 from Pyropia yezoensis (Susabi-nori).